Reading from the N-terminus, the 284-residue chain is 2-dehydro-3-deoxyphosphooctonate aldolase (284 aa).

It belongs to the KdsA family.

The protein localises to the cytoplasm. The enzyme catalyses D-arabinose 5-phosphate + phosphoenolpyruvate + H2O = 3-deoxy-alpha-D-manno-2-octulosonate-8-phosphate + phosphate. Its pathway is carbohydrate biosynthesis; 3-deoxy-D-manno-octulosonate biosynthesis; 3-deoxy-D-manno-octulosonate from D-ribulose 5-phosphate: step 2/3. The protein operates within bacterial outer membrane biogenesis; lipopolysaccharide biosynthesis. The protein is 2-dehydro-3-deoxyphosphooctonate aldolase of Enterobacter sp. (strain 638).